A 344-amino-acid chain; its full sequence is Type II methyltransferase M.FnuDI (344 aa).

The 330-residue stretch at 1–330 (MKLLSLFSGA…KRIKETLTDK (330 aa)) folds into the SAM-dependent MTase C5-type domain. C71 is a catalytic residue.

The protein belongs to the class I-like SAM-binding methyltransferase superfamily. C5-methyltransferase family.

The catalysed reaction is a 2'-deoxycytidine in DNA + S-adenosyl-L-methionine = a 5-methyl-2'-deoxycytidine in DNA + S-adenosyl-L-homocysteine + H(+). A methylase, recognizes the double-stranded sequence 5'-GGCC-3', methylates C-? on both strands, and protects the DNA from cleavage by the FnuDI endonuclease. This Fusobacterium nucleatum protein is Type II methyltransferase M.FnuDI (fnuDIM).